Reading from the N-terminus, the 448-residue chain is N-succinylarginine dihydrolase (448 aa).

Residues 19–28 (GGLSYGNVAS), Asn110, and 137–138 (HR) contribute to the substrate site. Glu174 is an active-site residue. Position 214 (Arg214) interacts with substrate. Residue His250 is part of the active site. Residues Asp252 and Asn365 each contribute to the substrate site. The active-site Nucleophile is the Cys371.

It belongs to the succinylarginine dihydrolase family. As to quaternary structure, homodimer.

The enzyme catalyses N(2)-succinyl-L-arginine + 2 H2O + 2 H(+) = N(2)-succinyl-L-ornithine + 2 NH4(+) + CO2. It functions in the pathway amino-acid degradation; L-arginine degradation via AST pathway; L-glutamate and succinate from L-arginine: step 2/5. Catalyzes the hydrolysis of N(2)-succinylarginine into N(2)-succinylornithine, ammonia and CO(2). This is N-succinylarginine dihydrolase from Pseudomonas aeruginosa (strain LESB58).